Consider the following 216-residue polypeptide: Large ribosomal subunit protein uL3 (216 aa).

Belongs to the universal ribosomal protein uL3 family. As to quaternary structure, part of the 50S ribosomal subunit. Forms a cluster with proteins L14 and L19.

Functionally, one of the primary rRNA binding proteins, it binds directly near the 3'-end of the 23S rRNA, where it nucleates assembly of the 50S subunit. The chain is Large ribosomal subunit protein uL3 from Symbiobacterium thermophilum (strain DSM 24528 / JCM 14929 / IAM 14863 / T).